The sequence spans 32 residues: MSDIN-like toxin proprotein 2 (32 aa).

Positions 1-10 are excised as a propeptide; that stretch reads MSDINATRLP. Residues 11 to 17 constitute a cross-link (cyclopeptide (His-Pro)); sequence HLVRYPP. The propeptide occupies 18–32; the sequence is YVGDGTDLTLNRGEK.

It belongs to the MSDIN fungal toxin family. Processed by the macrocyclase-peptidase enzyme POPB to yield a toxic cyclic heptapeptide. POPB first removes 10 residues from the N-terminus. Conformational trapping of the remaining peptide forces the enzyme to release this intermediate rather than proceed to macrocyclization. The enzyme rebinds the remaining peptide in a different conformation and catalyzes macrocyclization of the N-terminal 7 residues.

Its function is as follows. Probable toxin that belongs to the MSDIN-like toxin family responsible for a large number of food poisoning cases and deaths. This is MSDIN-like toxin proprotein 2 from Amanita fuligineoides.